A 217-amino-acid chain; its full sequence is Probable GTP-binding protein EngB (217 aa).

The EngB-type G domain maps to 37 to 214 (AGVEVAFAGR…RAAMARLIGE (178 aa)). Residues 45 to 52 (GRSNVGKS), 72 to 76 (GRTQE), 92 to 95 (DMPG), 159 to 162 (TKAD), and 193 to 195 (TSS) each bind GTP. Positions 52 and 74 each coordinate Mg(2+).

Belongs to the TRAFAC class TrmE-Era-EngA-EngB-Septin-like GTPase superfamily. EngB GTPase family. It depends on Mg(2+) as a cofactor.

In terms of biological role, necessary for normal cell division and for the maintenance of normal septation. In Nitrobacter hamburgensis (strain DSM 10229 / NCIMB 13809 / X14), this protein is Probable GTP-binding protein EngB.